The sequence spans 573 residues: 60 kDa lysophospholipase (573 aa).

One can recognise an Asparaginase/glutaminase domain in the interval 9–355 (RRLLAVYTGG…DVRKELLTKD (347 aa)). Catalysis depends on T19, which acts as the Acyl-ester intermediate. An asparaginase region spans residues 41–350 (TLPMFHDEEH…PGLSLDVRKE (310 aa)). Residues 84–86 (DSS) and 116–117 (TD) contribute to the substrate site. ANK repeat units lie at residues 141 to 170 (GAQVPIHALWSDGRENLLGALLMAGQYVIP), 399 to 429 (ALVPSLACAAAHAGDVEALQALVELGSDLGL), 433 to 462 (NGQTPLHAAARGGHTEAVTMLLQRGVDVNT), 466 to 495 (DGFSPLLLAVRGRHPGVIGLLREAGASLST), and 533 to 562 (DGHSALHVAEAAGNLAVVAFLQSLEGAVGA).

It in the N-terminal section; belongs to the asparaginase 1 family. In terms of assembly, monomer.

It catalyses the reaction a 1-acyl-sn-glycero-3-phosphocholine + H2O = sn-glycerol 3-phosphocholine + a fatty acid + H(+). The catalysed reaction is L-asparagine + H2O = L-aspartate + NH4(+). The enzyme catalyses a 1-O-alkyl-2-acetyl-sn-glycero-3-phosphocholine + H2O = a 1-O-alkyl-sn-glycero-3-phosphocholine + acetate + H(+). It carries out the reaction 1-hexadecanoyl-sn-glycero-3-phosphocholine + H2O = sn-glycerol 3-phosphocholine + hexadecanoate + H(+). It catalyses the reaction 2 1-hexadecanoyl-sn-glycero-3-phosphocholine = 1,2-dihexadecanoyl-sn-glycero-3-phosphocholine + sn-glycerol 3-phosphocholine. The catalysed reaction is 1-octadecanoyl-sn-glycero-3-phosphocholine + H2O = octadecanoate + sn-glycerol 3-phosphocholine + H(+). The enzyme catalyses 1-(9Z-octadecenoyl)-sn-glycero-3-phosphocholine + H2O = sn-glycerol 3-phosphocholine + (9Z)-octadecenoate + H(+). It carries out the reaction 1-hexadecanoyl-sn-glycero-3-phosphoethanolamine + H2O = sn-glycero-3-phosphoethanolamine + hexadecanoate + H(+). It catalyses the reaction 1-(9Z-octadecenoyl)-sn-glycero-3-phosphoethanolamine + H2O = sn-glycero-3-phosphoethanolamine + (9Z)-octadecenoate + H(+). The catalysed reaction is 1-hexadecanoyl-sn-glycero-3-phosphoethanolamine + 1-hexadecanoyl-sn-glycero-3-phosphocholine = 1,2-dihexadecanoyl-sn-glycero-3-phosphoethanolamine + sn-glycerol 3-phosphocholine. The enzyme catalyses 2-(5Z,8Z,11Z,14Z)-eicosatetraenoyl-sn-glycero-3-phosphocholine + H2O = sn-glycerol 3-phosphocholine + (5Z,8Z,11Z,14Z)-eicosatetraenoate + H(+). It carries out the reaction 2-hexadecanoyl-sn-glycero-3-phosphocholine + H2O = sn-glycerol 3-phosphocholine + hexadecanoate + H(+). It catalyses the reaction 2 2-hexadecanoyl-sn-glycero-3-phosphocholine = 1,2-dihexadecanoyl-sn-glycero-3-phosphocholine + sn-glycerol 3-phosphocholine. The catalysed reaction is 1-O-(9Z)-octadecenoyl-2-O-acetyl-sn-glycero-3-phosphocholine + H2O = 2-acetyl-sn-glycero-3-phosphocholine + (9Z)-octadecenoate + H(+). The enzyme catalyses a 1-acyl-sn-glycero-3-phospho-(1D-myo-inositol) + 1-hexadecanoyl-sn-glycero-3-phosphocholine = a 1-acyl-2-hexadecanoyl-sn-glycero-3-phospho-(1D-myo-inositol) + sn-glycerol 3-phosphocholine. It carries out the reaction 2 2-(5Z,8Z,11Z,14Z)-eicosatetraenoyl-sn-glycero-3-phosphocholine = 1,2-di-(5Z,8Z,11Z,14Z-eicosatetraenoyl)-sn-glycero-3-phosphocholine + sn-glycerol 3-phosphocholine. Exhibits lysophospholipase, transacylase, PAF acetylhydrolase and asparaginase activities. Can catalyze three types of transacylation reactions: (1) acyl transfer from 1-acyl-sn-glycero-3-phosphocholine (1-acyl-GPC) to the sn-1(3) positions of glycerol and 2-acylglycerol (sn-1 to -1(3) transfer), (2) acyl transfer from 1-acyl-GPC to the sn-2 positions of 1-acyl-GPC, 1-acyl-sn-glycero-3-phosphoethanolamine (1-acyl-GPE), and other lysophospholipids (sn-1 to -2 transfer) and (3) acyl transfer from 2-acyl-GPC to the sn-1 position of 2-acyl-GPC and 2-acyl-GPE (sn-2 to -1 transfer). Mediates the synthesis of 1-arachidonoyl species of phospholipids by transferring the arachidonoyl residue from 2-arachidonoyl lysophospholipid to the sn-1 position of 2-acyl lysophospholipid. The polypeptide is 60 kDa lysophospholipase (ASPG) (Homo sapiens (Human)).